The primary structure comprises 263 residues: uncharacterized protein (263 aa).

The signal sequence occupies residues 1 to 22 (MEYLKRLALFISVIILTIFIMG). C23 carries the N-palmitoyl cysteine lipid modification. A lipid anchor (S-diacylglycerol cysteine) is attached at C23.

This sequence belongs to the staphylococcal tandem lipoprotein family.

The protein resides in the cell membrane. This is an uncharacterized protein from Staphylococcus aureus (strain MSSA476).